Here is a 28-residue protein sequence, read N- to C-terminus: uORF1 protein (28 aa).

The protein resides in the host cytoplasm. It is found in the host cytoskeleton. In terms of biological role, plays a role in the reorganization of host microtubules and intermediate filaments to form a cytoskeletal cage that surrounds the viral factories, protecting the site of viral replication. May play a role in viral infection of human cortical neurons. This chain is uORF1 protein, found in Zika virus (isolate ZIKV/Human/French Polynesia/10087PF/2013) (ZIKV).